Reading from the N-terminus, the 184-residue chain is Cell number regulator 5 (184 aa).

Residues 91-111 (MLWGLLTSLCCVFTGGLVLAV) traverse the membrane as a helical segment. A disordered region spans residues 162 to 184 (RTGSGSSPAPNVTPPPVQTMDEL).

This sequence belongs to the cornifelin family. Expressed in roots, leaves, stalks, immature ears, endosperm and pollen.

The protein localises to the membrane. This chain is Cell number regulator 5 (CNR5), found in Zea mays (Maize).